Here is a 259-residue protein sequence, read N- to C-terminus: tRNA pseudouridine synthase A (259 aa).

Residue Asp-52 is the Nucleophile of the active site. Tyr-110 provides a ligand contact to substrate.

It belongs to the tRNA pseudouridine synthase TruA family. As to quaternary structure, homodimer.

It carries out the reaction uridine(38/39/40) in tRNA = pseudouridine(38/39/40) in tRNA. Its function is as follows. Formation of pseudouridine at positions 38, 39 and 40 in the anticodon stem and loop of transfer RNAs. The protein is tRNA pseudouridine synthase A of Coprothermobacter proteolyticus (strain ATCC 35245 / DSM 5265 / OCM 4 / BT).